A 170-amino-acid polypeptide reads, in one-letter code: Adenine phosphoribosyltransferase (170 aa).

It belongs to the purine/pyrimidine phosphoribosyltransferase family. As to quaternary structure, homodimer.

The protein resides in the cytoplasm. The catalysed reaction is AMP + diphosphate = 5-phospho-alpha-D-ribose 1-diphosphate + adenine. It participates in purine metabolism; AMP biosynthesis via salvage pathway; AMP from adenine: step 1/1. In terms of biological role, catalyzes a salvage reaction resulting in the formation of AMP, that is energically less costly than de novo synthesis. The sequence is that of Adenine phosphoribosyltransferase from Streptococcus suis (strain 98HAH33).